The chain runs to 158 residues: Cyclic pyranopterin monophosphate synthase (158 aa).

Residues 76-78 and 114-115 contribute to the substrate site; these read LCH and ME. The active site involves D129.

The protein belongs to the MoaC family. As to quaternary structure, homohexamer; trimer of dimers.

The enzyme catalyses (8S)-3',8-cyclo-7,8-dihydroguanosine 5'-triphosphate = cyclic pyranopterin phosphate + diphosphate. It participates in cofactor biosynthesis; molybdopterin biosynthesis. Its function is as follows. Catalyzes the conversion of (8S)-3',8-cyclo-7,8-dihydroguanosine 5'-triphosphate to cyclic pyranopterin monophosphate (cPMP). The chain is Cyclic pyranopterin monophosphate synthase from Shewanella baltica (strain OS223).